The sequence spans 208 residues: Uracil phosphoribosyltransferase (208 aa).

5-phospho-alpha-D-ribose 1-diphosphate-binding positions include Arg78, Arg103, and 130-138 (DPMLAIGGS). Uracil is bound by residues Ile193 and 198–200 (GDA). Asp199 lines the 5-phospho-alpha-D-ribose 1-diphosphate pocket.

The protein belongs to the UPRTase family. The cofactor is Mg(2+).

The catalysed reaction is UMP + diphosphate = 5-phospho-alpha-D-ribose 1-diphosphate + uracil. It functions in the pathway pyrimidine metabolism; UMP biosynthesis via salvage pathway; UMP from uracil: step 1/1. Its activity is regulated as follows. Allosterically activated by GTP. Catalyzes the conversion of uracil and 5-phospho-alpha-D-ribose 1-diphosphate (PRPP) to UMP and diphosphate. The chain is Uracil phosphoribosyltransferase from Vibrio cholerae serotype O1 (strain ATCC 39315 / El Tor Inaba N16961).